We begin with the raw amino-acid sequence, 498 residues long: Heat stress transcription factor A-3 (498 aa).

The tract at residues 156 to 180 (RRRSSPTQQSGLQPGSSGESGLDPE) is disordered. The segment covering 160–174 (SPTQQSGLQPGSSGE) has biased composition (polar residues). A coiled-coil region spans residues 180 to 235 (ELNTLRREKSALLQEVTRLKQEHLQTIEQMSTLNQRLESAEDRQKQMVSFLAKLLQ). The interval 184 to 234 (LRREKSALLQEVTRLKQEHLQTIEQMSTLNQRLESAEDRQKQMVSFLAKLL) is hydrophobic repeat HR-A/B. Residues 258 to 263 (KRKFLK) carry the Nuclear localization signal motif. A disordered region spans residues 263 to 291 (KHVPHGNIDSGESSSQHTGESNLDFSPTS). A compositionally biased stretch (polar residues) spans 272–291 (SGESSSQHTGESNLDFSPTS). Residues 309-316 (LEDGDLNL) carry the Nuclear export signal motif. The interval 356-382 (LEIPPASGPRGQDPTIGRSKGKNVLSP) is disordered.

This sequence belongs to the HSF family. Class A subfamily. In terms of assembly, homotrimer. Post-translationally, exhibits temperature-dependent phosphorylation.

The protein resides in the cytoplasm. Its subcellular location is the nucleus. In terms of biological role, transcriptional regulator that specifically binds DNA of heat shock promoter elements (HSE). In Oryza sativa subsp. japonica (Rice), this protein is Heat stress transcription factor A-3 (HSFA3).